Reading from the N-terminus, the 156-residue chain is Small ribosomal subunit protein uS7 (156 aa).

This sequence belongs to the universal ribosomal protein uS7 family. As to quaternary structure, part of the 30S ribosomal subunit. Contacts proteins S9 and S11.

In terms of biological role, one of the primary rRNA binding proteins, it binds directly to 16S rRNA where it nucleates assembly of the head domain of the 30S subunit. Is located at the subunit interface close to the decoding center, probably blocks exit of the E-site tRNA. The protein is Small ribosomal subunit protein uS7 of Alkaliphilus oremlandii (strain OhILAs) (Clostridium oremlandii (strain OhILAs)).